Consider the following 424-residue polypeptide: MTTVVAFILMFGVLVSIHEWGHLIFAKRAGMLVREFAIGFGPKIFSFTKNETLYTIRLIPAGGYVRVAGEDPEIIELKPGHHIGLEFNQAGEVSKIIVNNKSKHPYARVIEVENVDLDHKLIIEGYELDDDENRLSFNVNEKAMFVMDERETQIAPYNRQFASKSTGKRAMQLFAGPMMNFVLAIAIFLILGIIQGVPVEEAKLGEIQPDTPAEQAGFQQDDVITQIGDQSISTWEEFTSIVRENPGQELDMVIQRNGESQDISVVPGEAEAVNEVGDPITIGQIGVYQGFEKDVLGTFVYGIERTYDTTTMIIQNLFMLVTGQVSIELLSGPVGIYDATDQVVQTGFSNFLLWTAMLSINLGIINLVPLPALDGGRLLFVGLEAVRGKPIAPEKEGIFHFVGFALLMLLMIVVTWNDIQRLFL.

5 consecutive transmembrane segments (helical) span residues 5 to 25, 174 to 194, 317 to 337, 351 to 371, and 396 to 416; these read VAFILMFGVLVSIHEWGHLIF, FAGPMMNFVLAIAIFLILGII, LFMLVTGQVSIELLSGPVGIY, FLLWTAMLSINLGIINLVPLP, and EGIFHFVGFALLMLLMIVVTW. Residue histidine 18 participates in Zn(2+) binding. Glutamate 19 is an active-site residue. Histidine 22 is a Zn(2+) binding site. Residues 184 to 269 enclose the PDZ domain; that stretch reads AIAIFLILGI…SQDISVVPGE (86 aa).

Belongs to the peptidase M50B family. Zn(2+) is required as a cofactor.

It is found in the cell membrane. Functionally, is responsible for Site-2 cleavage of the RsiW anti-sigma factor. This results, after a third proteolytic step catalyzed by the ClpXP protease, in the release of SigW and the transcription activation of the genes under the control of the sigma-W factor. The chain is Zinc metalloprotease RasP (rasP) from Oceanobacillus iheyensis (strain DSM 14371 / CIP 107618 / JCM 11309 / KCTC 3954 / HTE831).